Consider the following 867-residue polypeptide: Xylosyltransferase 2 (867 aa).

At 1 to 15 (MVASARVQKLVRRYK) the chain is on the cytoplasmic side. A helical; Signal-anchor for type II membrane protein membrane pass occupies residues 16–36 (LAIATALAILLLQGLVVWSFS). Residues 37–867 (VLEDDEPGEK…GPVKADGRLR (831 aa)) lie on the Lumenal side of the membrane. The tract at residues 41–122 (DEPGEKGRQK…PPPEAPGRQN (82 aa)) is disordered. The segment covering 53–65 (RPLDPSEGSKDTD) has biased composition (basic and acidic residues). The span at 73–82 (SAGRRHGRWR) shows a compositional bias: basic residues. Residue Asn-122 is glycosylated (N-linked (GlcNAc...) asparagine). 2 disulfide bridges follow: Cys-161–Cys-189 and Cys-205–Cys-447. UDP-alpha-D-xylose contacts are provided by residues Val-238, Asp-266, and 295–297 (TIW). N-linked (GlcNAc...) asparagine glycosylation is present at Asn-326. UDP-alpha-D-xylose contacts are provided by residues 399–400 (DW), Ser-480, and 503–504 (RK). 2 cysteine pairs are disulfide-bonded: Cys-580–Cys-835 and Cys-828–Cys-841. N-linked (GlcNAc...) asparagine glycosylation is present at Asn-685.

It belongs to the glycosyltransferase 14 family. XylT subfamily. As to quaternary structure, monomer. Requires Mg(2+) as cofactor. Mn(2+) is required as a cofactor. In terms of processing, contains disulfide bonds.

It localises to the golgi apparatus membrane. The protein localises to the secreted. The enzyme catalyses UDP-alpha-D-xylose + L-seryl-[protein] = 3-O-(beta-D-xylosyl)-L-seryl-[protein] + UDP + H(+). It participates in glycan metabolism; chondroitin sulfate biosynthesis. Its pathway is glycan metabolism; heparan sulfate biosynthesis. Its function is as follows. Catalyzes the first step in the biosynthesis of chondroitin sulfate, heparan sulfate and dermatan sulfate proteoglycans, such as DCN. Transfers D-xylose from UDP-D-xylose to specific serine residues of the core protein. The chain is Xylosyltransferase 2 (XYLT2) from Bos taurus (Bovine).